The chain runs to 253 residues: uncharacterized protein (253 aa).

Residues 200–209 (TGREHAHKGP) are compositionally biased toward basic and acidic residues. 2 disordered regions span residues 200–225 (TGRE…PNPA) and 234–253 (QHSP…SAAT).

As to expression, most abundantly expressed in gastrointestinal tissues. Expressed at lower levels in kidney and placenta. Expressed in fetal brain, liver, placenta, kidney and lung.

This is an uncharacterized protein from Homo sapiens (Human).